Reading from the N-terminus, the 385-residue chain is Lysine 6-dehydrogenase (385 aa).

Belongs to the saccharopine dehydrogenase family. In terms of assembly, homohexamer.

The catalysed reaction is L-lysine + NAD(+) = L-1-piperideine-6-carboxylate + NH4(+) + NADH + 2 H(+). In terms of biological role, catalyzes the oxidative deamination of L-lysine in the presence of NAD. Can also use (S)-(2-aminoethyl)-L-cysteine as a substrate, but more slowly. Can use both NAD and NADP but the preferred substrate is NAD. This Geobacillus stearothermophilus (Bacillus stearothermophilus) protein is Lysine 6-dehydrogenase (lysDH).